Reading from the N-terminus, the 185-residue chain is Prenylated Rab acceptor protein 1 (185 aa).

The Cytoplasmic portion of the chain corresponds to M1–Y78. The tract at residues A30–F54 is required for interaction with prenylated RAB3A and VAMP2. The next 2 helical transmembrane spans lie at V79–P94 and M95–L112. At R113 to Q131 the chain is on the cytoplasmic side. The next 2 membrane-spanning stretches (helical) occupy residues Y132 to A148 and G149 to S165. Positions S165–V185 are required for interaction with GDI1. The Cytoplasmic portion of the chain corresponds to H166–V185. Positions V175 to V185 are required for interaction with prenylated RAB3A and VAMP2. The interval V175 to V185 is homodimerization.

It belongs to the PRA1 family. Homodimer. Interacts with VAMP2 (synaptobrevin-2), prenylated Rab proteins, GDI1, NRDG1 and PCLO.

It is found in the cell membrane. Its subcellular location is the cytoplasm. The protein resides in the golgi apparatus. The protein localises to the cytoplasmic vesicle. It localises to the secretory vesicle. It is found in the synaptic vesicle. In terms of biological role, general Rab protein regulator required for vesicle formation from the Golgi complex. May control vesicle docking and fusion by mediating the action of Rab GTPases to the SNARE complexes. In addition it inhibits the removal of Rab GTPases from the membrane by GDI1. The protein is Prenylated Rab acceptor protein 1 (RABAC1) of Sus scrofa (Pig).